The following is a 372-amino-acid chain: 4-hydroxy-3-methylbut-2-en-1-yl diphosphate synthase (flavodoxin) (372 aa).

[4Fe-4S] cluster contacts are provided by Cys270, Cys273, Cys305, and Glu312.

This sequence belongs to the IspG family. It depends on [4Fe-4S] cluster as a cofactor.

It carries out the reaction (2E)-4-hydroxy-3-methylbut-2-enyl diphosphate + oxidized [flavodoxin] + H2O + 2 H(+) = 2-C-methyl-D-erythritol 2,4-cyclic diphosphate + reduced [flavodoxin]. The protein operates within isoprenoid biosynthesis; isopentenyl diphosphate biosynthesis via DXP pathway; isopentenyl diphosphate from 1-deoxy-D-xylulose 5-phosphate: step 5/6. In terms of biological role, converts 2C-methyl-D-erythritol 2,4-cyclodiphosphate (ME-2,4cPP) into 1-hydroxy-2-methyl-2-(E)-butenyl 4-diphosphate. In Vibrio vulnificus (strain CMCP6), this protein is 4-hydroxy-3-methylbut-2-en-1-yl diphosphate synthase (flavodoxin).